A 793-amino-acid polypeptide reads, in one-letter code: Toll-like receptor 2 type-1 (793 aa).

Positions 1–25 are cleaved as a signal peptide; the sequence is MFNQSKQKPTMKLMWQAWLIYTALA. Over 26–597 the chain is Extracellular; the sequence is AHLPEEQALR…QLSLMECHRS (572 aa). The cysteines at positions 41 and 47 are disulfide-linked. Asn-48 carries an N-linked (GlcNAc...) asparagine glycan. LRR repeat units follow at residues 64 to 85, 88 to 109, 112 to 133, 136 to 157, 161 to 182, and 185 to 206; these read KITV…DLQK, NLRT…SFGS, KLEL…WFGP, SLQH…SPFS, NLSS…NFEG, and FLNT…SLKS. Asn-120 carries an N-linked (GlcNAc...) asparagine glycan. Residues Asn-161, Asn-195, Asn-254, and Asn-325 are each glycosylated (N-linked (GlcNAc...) asparagine). A disulfide bridge connects residues Cys-362 and Cys-391. LRR repeat units lie at residues 370–391, 397–418, 423–444, 446–467, 468–486, 487–508, and 509–530; these read SLLY…ETIC, SLQT…ARYI, KLIN…CEWP, NLKY…IPST, LEVL…LQLP, FLKE…TDIP, and NLVA…EFES. Asn-402 is a glycosylation site (N-linked (GlcNAc...) asparagine). Cys-441 and Cys-463 are oxidised to a cystine. A glycan (N-linked (GlcNAc...) asparagine) is linked at Asn-451. One can recognise an LRRCT domain in the interval 542 to 596; the sequence is NNFICSCEFLSFIHHEAGIAQVLVGWPESYICDSPLTVRGAQVGSVQLSLMECHR. A helical transmembrane segment spans residues 598–618; sequence LLVSLICTLVFLFILILVVVG. Topologically, residues 619–793 are cytoplasmic; the sequence is YKYHAVWYMR…WENLKAALKS (175 aa). Residues 648–791 enclose the TIR domain; it reads ICYDAFVSYS…MFWENLKAAL (144 aa).

The protein belongs to the Toll-like receptor family. In terms of assembly, binds MYD88 (via TIR domain). In terms of processing, N-glycosylated. TLR2-1 is more heavily glycosylated than TLR2-2. Highly expressed in ovary. Detected at lower levels in heart, lung, gizzard and testis.

The protein resides in the membrane. In terms of biological role, participates in the innate immune response to microbial agents. Acts via MYD88 and TRAF6, leading to NF-kappa-B activation, cytokine secretion and the inflammatory response. Does not respond to LPS and responds with less ability than TLR2-2 to mycoplasmal macrophage-activating lipopeptide-2kD (MALP-2). This Gallus gallus (Chicken) protein is Toll-like receptor 2 type-1 (TLR2-1).